The sequence spans 306 residues: Elongation factor Ts (306 aa).

The tract at residues 80-83 (TDFV) is involved in Mg(2+) ion dislocation from EF-Tu.

It belongs to the EF-Ts family.

The protein localises to the cytoplasm. In terms of biological role, associates with the EF-Tu.GDP complex and induces the exchange of GDP to GTP. It remains bound to the aminoacyl-tRNA.EF-Tu.GTP complex up to the GTP hydrolysis stage on the ribosome. The protein is Elongation factor Ts of Clostridium kluyveri (strain NBRC 12016).